The chain runs to 264 residues: Thymidylate synthase (264 aa).

Arg21 is a dUMP binding site. His51 contacts (6R)-5,10-methylene-5,6,7,8-tetrahydrofolate. 126-127 serves as a coordination point for dUMP; the sequence is RR. The active-site Nucleophile is Cys146. Residues 166–169, Asn177, and 207–209 contribute to the dUMP site; these read RSCD and HLY. Asp169 serves as a coordination point for (6R)-5,10-methylene-5,6,7,8-tetrahydrofolate. Ala263 is a (6R)-5,10-methylene-5,6,7,8-tetrahydrofolate binding site.

Belongs to the thymidylate synthase family. Bacterial-type ThyA subfamily. Homodimer.

It localises to the cytoplasm. It carries out the reaction dUMP + (6R)-5,10-methylene-5,6,7,8-tetrahydrofolate = 7,8-dihydrofolate + dTMP. It functions in the pathway pyrimidine metabolism; dTTP biosynthesis. Functionally, catalyzes the reductive methylation of 2'-deoxyuridine-5'-monophosphate (dUMP) to 2'-deoxythymidine-5'-monophosphate (dTMP) while utilizing 5,10-methylenetetrahydrofolate (mTHF) as the methyl donor and reductant in the reaction, yielding dihydrofolate (DHF) as a by-product. This enzymatic reaction provides an intracellular de novo source of dTMP, an essential precursor for DNA biosynthesis. This is Thymidylate synthase from Citrobacter koseri (strain ATCC BAA-895 / CDC 4225-83 / SGSC4696).